The chain runs to 156 residues: Myosin, essential light chain, adductor muscle (156 aa).

2 EF-hand domains span residues 6–43 (DEID…LGIN) and 81–116 (GTFA…LGER).

Functionally, in molluscan muscle, calcium regulation is associated with myosin rather than with actin. Muscle myosin contains two types of light chains: the catalytic light chain, essential for ATPase activity, and the regulatory light chain, a calcium-binding protein responsible for Ca(2+) dependent binding and Ca(2+) dependent Mg-ATPase activity. The polypeptide is Myosin, essential light chain, adductor muscle (Mizuhopecten yessoensis (Japanese scallop)).